A 466-amino-acid polypeptide reads, in one-letter code: MSSPLGHFQILVFLHALLIFSAESRKTQLLNDNDVESSDKSAKGTRWAVLVAGSNEYYNYRHQADICHAYQILRKGGLKDENIIVFMYDDIAFSSENPRPGVIINKPDGEDVYKGVPKDYTKEAVNVQNFYNVLLGNESGVTGGNGKVVKSGPNDNIFIYYADHGAPGLIAMPTGDEVMAKDFNEVLEKMHKRKKYNKMVIYVEACESGSMFEGILKKNLNIYAVTAANSKESSWGVYCPESYPPPPSEIGTCLGDTFSISWLEDSDLHDMSKETLEQQYHVVKRRVGSDVPETSHVCRFGTEKMLKDYLSSYIGRNPENDNFTFTESFSSPISNSGLVNPRDIPLLYLQRKIQKAPMGSLESKEAQKKLLDEKNHRKQIDQSITDILRLSVKQTNVLNLLTSTRTTGQPLVDDWDCFKTLVNSFKNHCGATVHYGLKYTGALANICNMGVDVKQTVSAIEQACSM.

A signal peptide spans 1-24 (MSSPLGHFQILVFLHALLIFSAES). Asparagine 137 carries N-linked (GlcNAc...) asparagine glycosylation. Histidine 164 is an active-site residue. Cysteine 206 (nucleophile) is an active-site residue. Cysteine 239 and cysteine 253 are disulfide-bonded. The N-linked (GlcNAc...) asparagine glycan is linked to asparagine 322. 2 disulfides stabilise this stretch: cysteine 417–cysteine 447 and cysteine 429–cysteine 464.

This sequence belongs to the peptidase C13 family. Post-translationally, auto-catalytic activation. In terms of tissue distribution, seed specific. Restricted to developing seeds at 7 days after anthesis, and, at lower levels, detected in flowers. Detected in siliques, specifically in seed coats (at protein level).

It localises to the secreted. It is found in the extracellular space. Its subcellular location is the cell wall. The protein localises to the vacuole. The catalysed reaction is Hydrolysis of proteins and small molecule substrates at -Asn-|-Xaa- bonds.. With respect to regulation, strongly inhibited by biotin-YVAD-fmk (a caspase-1 inhibitor) and by Ac-DEVD-fmk. In terms of biological role, asparagine-specific endopeptidase that may be involved in processing of proteins targeted to vacuoles. Probably involved in post-translational proteolysis of seed storage proteins in the protein storage vacuole of developing seeds. Exhibits a caspase-1-like activity in extracellular granules. At the early stage of seed development, required for the formation of the seed coat, by regulating cell death of specific cell layers in inner integument. The chain is Vacuolar-processing enzyme delta-isozyme from Arabidopsis thaliana (Mouse-ear cress).